A 956-amino-acid polypeptide reads, in one-letter code: Golgin candidate 5 (956 aa).

Disordered regions lie at residues 70-230 (MSFM…QHKI) and 278-298 (IFES…SSDE). Composition is skewed to basic and acidic residues over residues 77–89 (SDEK…DSVR) and 118–129 (ANKETNVRREAD). 2 stretches are compositionally biased toward polar residues: residues 160 to 177 (EYSL…SLQP) and 184 to 193 (TASQDSQPEQ). Basic and acidic residues predominate over residues 206–219 (SEAKEVTVENKDTV). Residues 333–765 (SDSADVILEL…LIQKDLEREK (433 aa)) adopt a coiled-coil conformation. Position 793 is a phosphoserine (S793). Residues 851–951 (SAYEATLRQK…EMYREQVNML (101 aa)) are a coiled coil.

As to quaternary structure, interacts with RABH1B and RABH1C, but not with RABD1 or RABD2A.

The protein resides in the golgi apparatus. Its subcellular location is the cytoplasm. Its function is as follows. Golgi matrix protein playing a role in tethering of vesicles to Golgi membranes and in maintaining the overall structure of the Golgi apparatus. In Arabidopsis thaliana (Mouse-ear cress), this protein is Golgin candidate 5 (GC5).